Consider the following 60-residue polypeptide: Conotoxin Cl1.1 (60 aa).

Positions 1–19 (MRCLPVIVILLLLISSAAA) are cleaved as a signal peptide. A propeptide spanning residues 20 to 48 (VVEGPLRVNRRLRPRKAPVDMQARDWNWG) is cleaved from the precursor.

Belongs to the conotoxin T superfamily. Post-translationally, contains 2 disulfide bonds. In terms of tissue distribution, expressed by the venom duct.

The protein localises to the secreted. The polypeptide is Conotoxin Cl1.1 (Californiconus californicus (California cone)).